A 68-amino-acid polypeptide reads, in one-letter code: MTPALYRVRQPFFWRNTISLFVIGSIPLAAYWYTFTKMTEDEFSDIPIPPISDEELTKLKKEYEAGKQ.

The Mitochondrial matrix portion of the chain corresponds to Met1–Pro11. Residues Phe12 to Thr34 traverse the membrane as a helical segment. The Mitochondrial intermembrane portion of the chain corresponds to Phe35–Gln68.

It belongs to the COA3 family. In terms of assembly, component of 250-400 kDa complexes called cytochrome oxidase assembly intermediates or COA complexes.

The protein localises to the mitochondrion inner membrane. Required for assembly of cytochrome c oxidase (complex IV). This Lodderomyces elongisporus (strain ATCC 11503 / CBS 2605 / JCM 1781 / NBRC 1676 / NRRL YB-4239) (Yeast) protein is Cytochrome c oxidase assembly factor 3, mitochondrial (COA3).